A 265-amino-acid chain; its full sequence is Mlc titration factor A (265 aa).

Positions 111, 148, 152, and 211 each coordinate Zn(2+).

Belongs to the MtfA family. Interacts with Mlc. Requires Zn(2+) as cofactor.

The protein localises to the cytoplasm. Its function is as follows. Involved in the modulation of the activity of the glucose-phosphotransferase system (glucose-PTS). Interacts with the transcriptional repressor Mlc, preventing its interaction with DNA and leading to the modulation of expression of genes regulated by Mlc, including ptsG, which encodes the PTS system glucose-specific EIICB component. In terms of biological role, shows zinc-dependent metallopeptidase activity. This is Mlc titration factor A from Escherichia coli (strain UTI89 / UPEC).